We begin with the raw amino-acid sequence, 508 residues long: Aldehyde dehydrogenase (508 aa).

Residues Glu-264 and Cys-303 contribute to the active site.

Belongs to the aldehyde dehydrogenase family.

It catalyses the reaction acetaldehyde + NAD(+) + H2O = acetate + NADH + 2 H(+). It functions in the pathway organosulfur degradation. Functionally, catalyzes the NAD(+)-dependent oxidation of acetaldehyde to acetate. This Paracoccus denitrificans (strain Pd 1222) protein is Aldehyde dehydrogenase.